Here is a 141-residue protein sequence, read N- to C-terminus: ATP synthase epsilon chain (141 aa).

Belongs to the ATPase epsilon chain family. In terms of assembly, F-type ATPases have 2 components, CF(1) - the catalytic core - and CF(0) - the membrane proton channel. CF(1) has five subunits: alpha(3), beta(3), gamma(1), delta(1), epsilon(1). CF(0) has three main subunits: a, b and c.

It is found in the cell inner membrane. Functionally, produces ATP from ADP in the presence of a proton gradient across the membrane. In Acidithiobacillus ferridurans, this protein is ATP synthase epsilon chain (atpC).